The sequence spans 227 residues: Ribose-5-phosphate isomerase A (227 aa).

Substrate contacts are provided by residues 26–29, 82–85, and 95–98; these read TGST, DGAD, and KGGG. Glu-104 functions as the Proton acceptor in the catalytic mechanism. Position 122 (Lys-122) interacts with substrate.

It belongs to the ribose 5-phosphate isomerase family. In terms of assembly, homodimer.

It catalyses the reaction aldehydo-D-ribose 5-phosphate = D-ribulose 5-phosphate. Its pathway is carbohydrate degradation; pentose phosphate pathway; D-ribose 5-phosphate from D-ribulose 5-phosphate (non-oxidative stage): step 1/1. Functionally, catalyzes the reversible conversion of ribose-5-phosphate to ribulose 5-phosphate. The sequence is that of Ribose-5-phosphate isomerase A from Streptococcus pneumoniae serotype 2 (strain D39 / NCTC 7466).